Consider the following 432-residue polypeptide: Protein ABHD8 (432 aa).

Disordered stretches follow at residues 47–69 (KHAG…QGDQ) and 121–149 (PAGS…RPKR). Pro residues predominate over residues 52-61 (APAPTPPPPL). The segment covering 139–149 (GRRRRARRPKR) has biased composition (basic residues). The region spanning 170–272 (VLFFIHGVGG…HKVIMINGGG (103 aa)) is the AB hydrolase-1 domain. Residues S245, D363, and H391 each act as charge relay system in the active site.

The protein belongs to the AB hydrolase superfamily. In terms of assembly, interacts with NLRP3 (via NACHT and LLR domains); this interaction is enhanced in the presence of NLRP3 inflammasome inducers, such as ATP, nigericin, silica, or alum. Interacts with ZDHHC12.

It is found in the cytoplasm. Functionally, negatively regulates NLRP3-driven inflammation. Promotes NLRP3 degradation through the chaperone-mediated autophagy (CMA) pathway, hence attenuating inflammasome activation and IL1B secretion. Acts by recruiting palmitoyltransferase ZDHHC12 to NLRP3, facilitating NLRP3 palmitoylation and subsequent degradation. The chain is Protein ABHD8 from Bos taurus (Bovine).